The following is a 509-amino-acid chain: Cytochrome P450 monooxygenase AFT11-1 (509 aa).

Residue Cys432 participates in heme binding.

It belongs to the cytochrome P450 family. Heme serves as cofactor.

The protein operates within mycotoxin biosynthesis. Cytochrome P450 monooxygenase; part of the gene clusters that mediate the biosynthesis of the host-selective toxins (HSTs) AF-toxins responsible for Alternaria black spot of strawberry disease by the strawberry pathotype. AF-toxin I and III are valine derivatives of 2,3-dyhydroxy-isovaleric acid and 2-hydroxy-isovaleric acid respectively, while AF II is an isoleucine derivative of 2-hydroxy-valeric acid. These derivatives are bound to a 9,10-epoxy-8-hydroxy-9-methyl-decatrienoic acid (EDA) moiety. On cellular level, AF-toxins affect plasma membrane of susceptible cells and cause a sudden increase in loss of K(+) after a few minutes of toxin treatment. The aldo-keto reductase AFTS1 catalyzes the conversion of 2-keto-isovaleric acid (2-KIV) to 2-hydroxy-isovaleric acid (2-HIV) by reduction of its ketone to an alcohol. The acyl-CoA ligase AFT1, the hydrolase AFT2 and the enoyl-CoA hydratases AFT3 and AFT6, but also the polyketide synthase AFT9, the acyl-CoA dehydrogenase AFT10, the cytochrome P450 monooxygenase AFT11 and the oxidoreductase AFT12 are all involved in the biosynthesis of the AK-, AF- and ACT-toxin common EDA structural moiety. The exact function of each enzyme, and of additional enzymes identified within the AF-toxin clusters have still to be determined. The protein is Cytochrome P450 monooxygenase AFT11-1 of Alternaria alternata (Alternaria rot fungus).